The following is a 207-amino-acid chain: Phosphoserine phosphatase (207 aa).

Residue aspartate 8 is the Nucleophile of the active site. Mg(2+) is bound by residues aspartate 8 and aspartate 10. The active-site Proton donor is the aspartate 10. Residues glutamate 17, arginine 53, 96 to 97 (SG), and lysine 141 contribute to the substrate site. Aspartate 164 is a Mg(2+) binding site. Residue asparagine 167 participates in substrate binding.

This sequence belongs to the HAD-like hydrolase superfamily. SerB family. Requires Mg(2+) as cofactor.

The catalysed reaction is O-phospho-L-serine + H2O = L-serine + phosphate. It carries out the reaction O-phospho-D-serine + H2O = D-serine + phosphate. It participates in amino-acid biosynthesis; L-serine biosynthesis; L-serine from 3-phospho-D-glycerate: step 3/3. This Campylobacter jejuni subsp. doylei (strain ATCC BAA-1458 / RM4099 / 269.97) protein is Phosphoserine phosphatase.